A 278-amino-acid chain; its full sequence is Energy-coupling factor transporter ATP-binding protein EcfA1 (278 aa).

The region spanning 5–239 (LLLESVSYQY…QDKLEAAGID (235 aa)) is the ABC transporter domain. Residue 39-46 (GPNGSGKS) coordinates ATP.

Belongs to the ABC transporter superfamily. Energy-coupling factor EcfA family. Forms a stable energy-coupling factor (ECF) transporter complex composed of 2 membrane-embedded substrate-binding proteins (S component), 2 ATP-binding proteins (A component) and 2 transmembrane proteins (T component).

Its subcellular location is the cell membrane. Functionally, ATP-binding (A) component of a common energy-coupling factor (ECF) ABC-transporter complex. Unlike classic ABC transporters this ECF transporter provides the energy necessary to transport a number of different substrates. This Halalkalibacterium halodurans (strain ATCC BAA-125 / DSM 18197 / FERM 7344 / JCM 9153 / C-125) (Bacillus halodurans) protein is Energy-coupling factor transporter ATP-binding protein EcfA1.